The chain runs to 247 residues: NAD-dependent protein deacetylase (247 aa).

Positions 1-247 (METFKSILHE…EFARSLGMKK (247 aa)) constitute a Deacetylase sirtuin-type domain. 8 residues coordinate NAD(+): alanine 20, threonine 24, phenylalanine 31, arginine 32, glutamine 100, isoleucine 102, aspartate 103, and histidine 118. Phenylalanine 31 is a nicotinamide binding site. 2 residues coordinate nicotinamide: isoleucine 102 and aspartate 103. The Proton acceptor role is filled by histidine 118. Cysteine 126, cysteine 129, cysteine 146, and cysteine 156 together coordinate Zn(2+). NAD(+)-binding residues include threonine 192, serine 193, asparagine 218, and isoleucine 236.

It belongs to the sirtuin family. Class U subfamily. The cofactor is Zn(2+).

It is found in the cytoplasm. It carries out the reaction N(6)-acetyl-L-lysyl-[protein] + NAD(+) + H2O = 2''-O-acetyl-ADP-D-ribose + nicotinamide + L-lysyl-[protein]. Functionally, NAD-dependent protein deacetylase which modulates the activities of several enzymes which are inactive in their acetylated form. This chain is NAD-dependent protein deacetylase, found in Bacillus subtilis (strain 168).